A 139-amino-acid polypeptide reads, in one-letter code: Spermatogenesis-associated protein 33 (139 aa).

Residues M1–S67 form an interaction with ATG16L1 region. Residues M1 to V83 form a disordered region. Residues K25–D50 show a composition bias toward basic and acidic residues. The tract at residues L68–E139 is interaction with VDAC2. Residues P86–T91 carry the PQIIIT motif. A Phosphoserine modification is found at S94. Positions T97 to Q109 are enriched in polar residues. The disordered stretch occupies residues T97 to E139. Basic and acidic residues predominate over residues R110–P120.

In terms of assembly, interacts (via PQIIIT motif) with PPP3R1, PPP3R2, PPP3CA, PPP3CB and PPP3CC. Interacts with VDAC2. Interacts with ATG16L1 (via WD repeats).

Its subcellular location is the cytoplasm. It localises to the cytosol. The protein localises to the nucleus. The protein resides in the mitochondrion. Plays an important role in sperm motility and male fertility. Required for sperm midpiece flexibility and for the localization of sperm calcineurin to the mitochondria. Promotes mitophagy as well as acts as an autophagy mediator in male germline cells. Links damaged mitochondria to autophagosomes via its binding to the outer mitochondrial membrane protein VDAC2, as well as to key autophagy machinery component ATG16L1. In Homo sapiens (Human), this protein is Spermatogenesis-associated protein 33 (SPATA33).